The sequence spans 414 residues: Ceramide synthase 5 (414 aa).

Residues 1–43 (MATAAAETLGLLWGWLWSESFWLPQNVSWADLEGPGDGYGYPR) lie on the Lumenal side of the membrane. Residue Asn26 is glycosylated (N-linked (GlcNAc...) asparagine). Residues 44 to 64 (AQHVLSVFPLAVCIFSVRMLF) form a helical membrane-spanning segment. The tract at residues 75 to 136 (RVGIKDSPVN…RHRRNQDKPP (62 aa)) is homeobox-like. The 202-residue stretch at 139 to 340 (TKFCESMWRF…IVQTASKALS (202 aa)) folds into the TLC domain. A run of 4 helical transmembrane segments spans residues 148–168 (FTYYLCIFCYGIRFLWSMPWF), 187–207 (LYYYYITQLAFYWSLMFSQFI), 214–234 (FLMMFIHHMIGIMLTTFSYVN), and 272–292 (LFVIFGAAFIVSRLAIFPLWI). The Last loop motif motif lies at 299-309 (ESWEIIGPYPS). The helical transmembrane segment at 312-332 (LFNALLLILQVLHAIWSYLIV) threads the bilayer. Over 333–414 (QTASKALSRG…RASPHLHSCD (82 aa)) the chain is Cytoplasmic. Residues 347-373 (DDRSDVESSSEEEDETTHKNNLSGSSS) are disordered.

In terms of assembly, interacts with PAQR4; the interaction regulates the stability and activity of CERS5 and is inhibited in presence of ceramides. Post-translationally, phosphorylated at the C-terminus by CK2. In terms of tissue distribution, ubiquitously expressed, with highest levels in testis and kidney. Expressed in pulmonary epithelia.

The protein localises to the endoplasmic reticulum membrane. The enzyme catalyses a sphingoid base + hexadecanoyl-CoA = an N-hexadecanoyl-sphingoid base + CoA + H(+). It carries out the reaction sphinganine + hexadecanoyl-CoA = N-hexadecanoylsphinganine + CoA + H(+). The catalysed reaction is hexadecasphinganine + hexadecanoyl-CoA = N-hexadecanoylhexadecasphinganine + CoA + H(+). It catalyses the reaction sphing-4-enine + hexadecanoyl-CoA = N-hexadecanoylsphing-4-enine + CoA + H(+). The enzyme catalyses 2-hydroxyhexadecanoyl-CoA + sphinganine = N-(2-hydroxyhexadecanoyl)-sphinganine + CoA + H(+). It carries out the reaction sphinganine + tetradecanoyl-CoA = N-(tetradecanoyl)-sphinganine + CoA + H(+). The catalysed reaction is sphinganine + octadecanoyl-CoA = N-(octadecanoyl)-sphinganine + CoA + H(+). It catalyses the reaction sphinganine + (9Z)-octadecenoyl-CoA = N-(9Z-octadecenoyl)-sphinganine + CoA + H(+). The enzyme catalyses a fatty acyl-CoA + sphing-4-enine = an N-acylsphing-4-enine + CoA + H(+). It carries out the reaction tetracosenoyl-CoA + sphing-4-enine = N-(tetracosenoyl)-sphing-4-enine + CoA + H(+). It functions in the pathway lipid metabolism; sphingolipid metabolism. With respect to regulation, inhibited by fumonisin B1. Functionally, ceramide synthase that catalyzes the transfer of the acyl chain from acyl-CoA to a sphingoid base, with high selectivity toward palmitoyl-CoA (hexadecanoyl-CoA; C16:0-CoA). Can use other acyl donors, but with less efficiency. N-acylates sphinganine and sphingosine bases to form dihydroceramides and ceramides in de novo synthesis and salvage pathways, respectively. Plays a role in de novo ceramide synthesis and surfactant homeostasis in pulmonary epithelia. The protein is Ceramide synthase 5 of Mus musculus (Mouse).